The following is a 238-amino-acid chain: 1-(5-phosphoribosyl)-5-[(5-phosphoribosylamino)methylideneamino] imidazole-4-carboxamide isomerase (238 aa).

Asp-8 (proton acceptor) is an active-site residue. The active-site Proton donor is Asp-129.

This sequence belongs to the HisA/HisF family.

It is found in the cytoplasm. The catalysed reaction is 1-(5-phospho-beta-D-ribosyl)-5-[(5-phospho-beta-D-ribosylamino)methylideneamino]imidazole-4-carboxamide = 5-[(5-phospho-1-deoxy-D-ribulos-1-ylimino)methylamino]-1-(5-phospho-beta-D-ribosyl)imidazole-4-carboxamide. Its pathway is amino-acid biosynthesis; L-histidine biosynthesis; L-histidine from 5-phospho-alpha-D-ribose 1-diphosphate: step 4/9. In Anaeromyxobacter dehalogenans (strain 2CP-C), this protein is 1-(5-phosphoribosyl)-5-[(5-phosphoribosylamino)methylideneamino] imidazole-4-carboxamide isomerase.